Here is a 514-residue protein sequence, read N- to C-terminus: 3-octaprenyl-4-hydroxybenzoate carboxy-lyase (514 aa).

Residue asparagine 177 coordinates Mn(2+). Residues 180-182, 194-196, and 199-200 contribute to the prenylated FMN site; these read IYR, RWL, and RG. Residue glutamate 243 coordinates Mn(2+). Residue aspartate 314 is the Proton donor of the active site.

It belongs to the UbiD family. Homohexamer. Requires prenylated FMN as cofactor. Mn(2+) is required as a cofactor.

The protein resides in the cell membrane. The enzyme catalyses a 4-hydroxy-3-(all-trans-polyprenyl)benzoate + H(+) = a 2-(all-trans-polyprenyl)phenol + CO2. The protein operates within cofactor biosynthesis; ubiquinone biosynthesis. Its function is as follows. Catalyzes the decarboxylation of 3-octaprenyl-4-hydroxy benzoate to 2-octaprenylphenol, an intermediate step in ubiquinone biosynthesis. The sequence is that of 3-octaprenyl-4-hydroxybenzoate carboxy-lyase from Bordetella parapertussis (strain 12822 / ATCC BAA-587 / NCTC 13253).